The chain runs to 657 residues: Tyramine beta-hydroxylase (657 aa).

A helical transmembrane segment spans residues 77-97 (VALLFLLVAYCGGVVHAGEIV). A DOMON domain is found at 103–214 (TNVTVKWHTD…GTTQFYIAAS (112 aa)). N-linked (GlcNAc...) asparagine glycans are attached at residues asparagine 104 and asparagine 143. The active site involves tyrosine 278. Intrachain disulfides connect cysteine 280/cysteine 330 and cysteine 319/cysteine 342. The Cu(2+) site is built by histidine 312 and histidine 313. Residues histidine 380, histidine 458, histidine 460, and methionine 533 each coordinate Cu(2+). 3 disulfides stabilise this stretch: cysteine 437-cysteine 549, cysteine 441-cysteine 606, and cysteine 512-cysteine 534. Histidine 458 is a catalytic residue. Asparagine 555 carries N-linked (GlcNAc...) asparagine glycosylation.

Belongs to the copper type II ascorbate-dependent monooxygenase family. It depends on Cu(2+) as a cofactor. In terms of tissue distribution, present in synaptic regions of RIC interneurons. Present in gonadal sheath cells of hermaphrodites (at protein level).

The protein resides in the membrane. It carries out the reaction tyramine + L-ascorbate + O2 = (R)-octopamine + L-dehydroascorbate + H2O. Its function is as follows. Required for the conversion of tyramine to octopamine, a precursor of octapamine but probably itself a neurotransmitter. Involved in the regulation of egg laying, which is inhibited by tyramine. Due to its involvement in octopamine biosynthesis, also required for crtc-1-dependent regulation of AMPK-mediated longevity. The polypeptide is Tyramine beta-hydroxylase (Caenorhabditis elegans).